A 95-amino-acid polypeptide reads, in one-letter code: Secreted RxLR effector protein 20 (95 aa).

An N-terminal signal peptide occupies residues 1–20; sequence MQSPYIILFALVTLLGSISG. A RxLR motif is present at residues 47–50; the sequence is RLLR.

This sequence belongs to the RxLR effector family.

Its subcellular location is the secreted. The protein resides in the host nucleus. The protein localises to the host cytoplasm. Secreted effector that partially suppresses the host cell death induced by cell death-inducing proteins. This chain is Secreted RxLR effector protein 20, found in Plasmopara viticola (Downy mildew of grapevine).